The following is a 278-amino-acid chain: UPF0276 protein Shew_2240 (278 aa).

The protein belongs to the UPF0276 family.

This Shewanella loihica (strain ATCC BAA-1088 / PV-4) protein is UPF0276 protein Shew_2240.